Consider the following 203-residue polypeptide: Probable chemoreceptor glutamine deamidase CheD (203 aa).

The protein belongs to the CheD family.

It carries out the reaction L-glutaminyl-[protein] + H2O = L-glutamyl-[protein] + NH4(+). In terms of biological role, probably deamidates glutamine residues to glutamate on methyl-accepting chemotaxis receptors (MCPs), playing an important role in chemotaxis. In Methylobacillus flagellatus (strain ATCC 51484 / DSM 6875 / VKM B-1610 / KT), this protein is Probable chemoreceptor glutamine deamidase CheD.